The primary structure comprises 203 residues: Undecaprenyl phosphate transporter A (203 aa).

5 consecutive transmembrane segments (helical) span residues 16-36, 48-68, 108-128, 137-157, and 173-193; these read AIFILILLENVLPIVPSEIIL, LSILTLFIIATIASFIGLLIL, YGVWAVFICRFIPVLRVLITI, VVTFTVISLIGTTIWNFGLIL, and LHTYSRIMYVVIIIAVIYFAI.

It belongs to the DedA family.

The protein resides in the cell membrane. Its function is as follows. Flippase that catalyzes the transport of undecaprenyl phosphate (UndP) across the cytoplasmic membrane, from the external side to the cytoplasmic side. Is involved in UndP recycling during peptidoglycan synthesis. This chain is Undecaprenyl phosphate transporter A, found in Staphylococcus aureus (strain NCTC 8325 / PS 47).